The sequence spans 432 residues: Phosphomethylpyrimidine synthase (432 aa).

Residues asparagine 69, methionine 98, tyrosine 127, histidine 163, 185-187 (SRG), 226-229 (DACR), and glutamate 265 contribute to the substrate site. A Zn(2+)-binding site is contributed by histidine 269. Tyrosine 292 provides a ligand contact to substrate. Residue histidine 333 coordinates Zn(2+). Residues cysteine 409, cysteine 412, and cysteine 416 each coordinate [4Fe-4S] cluster.

The protein belongs to the ThiC family. [4Fe-4S] cluster serves as cofactor.

It catalyses the reaction 5-amino-1-(5-phospho-beta-D-ribosyl)imidazole + S-adenosyl-L-methionine = 4-amino-2-methyl-5-(phosphooxymethyl)pyrimidine + CO + 5'-deoxyadenosine + formate + L-methionine + 3 H(+). It functions in the pathway cofactor biosynthesis; thiamine diphosphate biosynthesis. In terms of biological role, catalyzes the synthesis of the hydroxymethylpyrimidine phosphate (HMP-P) moiety of thiamine from aminoimidazole ribotide (AIR) in a radical S-adenosyl-L-methionine (SAM)-dependent reaction. The protein is Phosphomethylpyrimidine synthase of Pelotomaculum thermopropionicum (strain DSM 13744 / JCM 10971 / SI).